A 372-amino-acid chain; its full sequence is PqqA peptide cyclase (372 aa).

In terms of domain architecture, Radical SAM core spans Ala4 to Arg220. 3 residues coordinate [4Fe-4S] cluster: Cys18, Cys22, and Cys25. The interval Ala342–Glu372 is disordered.

Belongs to the radical SAM superfamily. PqqE family. As to quaternary structure, interacts with PqqD. The interaction is necessary for activity of PqqE. Requires [4Fe-4S] cluster as cofactor.

The enzyme catalyses [PQQ precursor protein] + S-adenosyl-L-methionine = E-Y cross-linked-[PQQ precursor protein] + 5'-deoxyadenosine + L-methionine + H(+). It participates in cofactor biosynthesis; pyrroloquinoline quinone biosynthesis. Catalyzes the cross-linking of a glutamate residue and a tyrosine residue in the PqqA protein as part of the biosynthesis of pyrroloquinoline quinone (PQQ). The chain is PqqA peptide cyclase from Xanthomonas euvesicatoria pv. vesicatoria (strain 85-10) (Xanthomonas campestris pv. vesicatoria).